A 235-amino-acid chain; its full sequence is Ribonuclease PH (235 aa).

Residues Arg86 and 124–126 (GTR) contribute to the phosphate site.

Belongs to the RNase PH family. Homohexameric ring arranged as a trimer of dimers.

The catalysed reaction is tRNA(n+1) + phosphate = tRNA(n) + a ribonucleoside 5'-diphosphate. Phosphorolytic 3'-5' exoribonuclease that plays an important role in tRNA 3'-end maturation. Removes nucleotide residues following the 3'-CCA terminus of tRNAs; can also add nucleotides to the ends of RNA molecules by using nucleoside diphosphates as substrates, but this may not be physiologically important. Probably plays a role in initiation of 16S rRNA degradation (leading to ribosome degradation) during starvation. This is Ribonuclease PH from Legionella pneumophila (strain Paris).